The sequence spans 122 residues: Large ribosomal subunit protein uL14 (122 aa).

This sequence belongs to the universal ribosomal protein uL14 family. In terms of assembly, part of the 50S ribosomal subunit. Forms a cluster with proteins L3 and L19. In the 70S ribosome, L14 and L19 interact and together make contacts with the 16S rRNA in bridges B5 and B8.

Functionally, binds to 23S rRNA. Forms part of two intersubunit bridges in the 70S ribosome. The polypeptide is Large ribosomal subunit protein uL14 (Azorhizobium caulinodans (strain ATCC 43989 / DSM 5975 / JCM 20966 / LMG 6465 / NBRC 14845 / NCIMB 13405 / ORS 571)).